The primary structure comprises 140 residues: HTH-type transcriptional regulator AdhR (140 aa).

The HTH merR-type domain maps to 1–69 (MNIAQVAKQF…IEALIEYTTL (69 aa)). A DNA-binding region (H-T-H motif) is located at residues 3-22 (IAQVAKQFGLTAATLRYYER). Residues 75-125 (RTVEARKNILADERQRLIEKRKEIDETIKRLDTKIKDYDGKLRENEAKLKS) are a coiled coil. The segment at 120-140 (EAKLKSRPKTESLHGSVEQRR) is disordered.

Transcriptional regulator involved in the response to aldehyde stress. Binds to the promoter region of the adhA-yraA operon, the yraC and its own promoter region; binding is unchanged in the presence of aldehydes. This chain is HTH-type transcriptional regulator AdhR (adhR), found in Bacillus subtilis (strain 168).